Reading from the N-terminus, the 1670-residue chain is MAHAQTTEVCLSFHRSLLFPMGASQVVESVRFSFMTEQDVRKHSFLKVTSPILHDNVGNPFPGGLYDLKLGPKDDKQACNSCGQLKLACPGHCGHIELVFPIYHPLLFNLLFNFLQRACFFCHHFMAKPEDVERAVSQLKLIIKGDIVSAKQLESNTPTKSKSSDESCESVVTTDSSEECEDSDVEDQRWTSLQFAEVTAVLKNFMRLSSKSCSRCKGINPKLEKPMFGWVRMRAMKDSDVGANVIRGLKLKKSTSSVENPDGFDDSGIDALSEVEDGDKETREKSTEVAAEFEEHNSKRDLLPSEVRNILKHLWQNEHEFCSFIGDLWQSGSEKIDYSMFFLESVLVPPTKFRPPTTGGDSVMEHPQTVGLNKVIESNNILGNACTNKLDQSKVIFRWRNLQESVNVLFDSKTATVQSQRDSSGICQLLEKKEGLFRQKMMGKRVNHACRSVISPDPYIAVNDIGIPPCFALKLTYPERVTPWNVEKLREAIINGPDIHPGATHYSDKSSTMKLPSTEKARRAIARKLLSSRGATTELGKTCDINFEGKTVHRHMRDGDIVLVNRQPTLHKPSLMAHKVRVLKGEKTLRLHYANCSTYNADFDGDEMNVHFPQDEISRAEAYNIVNANNQYARPSNGEPLRALIQDHIVSSVLLTKRDTFLDKDHFNQLLFSSGVTDMVLSTFSGRSGKKVMVSASDAELLTVTPAILKPVPLWTGKQVITAVLNQITKGHPPFTVEKATKLPVDFFKCRSREVKPNSGDLTKKKEIDESWKQNLNEDKLHIRKNEFVCGVIDKAQFADYGLVHTVHELYGSNAAGNLLSVFSRLFTVFLQTHGFTCGVDDLIILKDMDEERTKQLQECENVGERVLRKTFGIDVDVQIDPQDMRSRIERILYEDGESALASLDRSIVNYLNQCSSKGVMNDLLSDGLLKTPGRNCISLMTISGAKGSKVNFQQISSHLGQQDLEGKRVPRMVSGKTLPCFHPWDWSPRAGGFISDRFLSGLRPQEYYFHCMAGREGLVDTAVKTSRSGYLQRCLMKNLESLKVNYDCTVRDADGSIIQFQYGEDGVDVHRSSFIEKFKELTINQDMVLQKCSEDMLSGASSYISDLPISLKKGAEKFVEAMPMNERIASKFVRQEELLKLVKSKFFASLAQPGEPVGVLAAQSVGEPSTQMTLNTFHLAGRGEMNVTLGIPRLQEILMTAAANIKTPIMTCPLLKGKTKEDANDITDRLRKITVADIIKSMELSVVPYTVYENEVCSIHKLKINLYKPEHYPKHTDITEEDWEETMRAVFLRKLEDAIETHMKMLHRIRGIHNDVTGPIAGNETDNDDSVSGKQNEDDGDDDGEGTEVDDLGSDAQKQKKQETDEMDYEENSEDETNEPSSISGVEDPEMDSENEDTEVSKEDTPEPQEESMEPQKEVKGVKNVKEQSKKKRRKFVRAKSDRHIFVKGEGEKFEVHFKFATDDPHILLAQIAQQTAQKVYIQNSGKIERCTVANCGDPQVIYHGDNPKERREISNDEKKASPALHASGVDFPALWEFQDKLDVRYLYSNSIHDMLNIFGVEAARETIIREINHVFKSYGISVSIRHLNLIADYMTFSGGYRPMSRMGGIAESTSPFCRMTFETATKFIVQAATYGEKDTLETPSARICLGLPALSGTGCFDLMQRVEL.

Residues Cys-79, Cys-82, Cys-89, His-92, Cys-119, and Cys-122 each contribute to the Zn(2+) site. Residues 154–185 (ESNTPTKSKSSDESCESVVTTDSSEECEDSDV) are disordered. A compositionally biased stretch (acidic residues) spans 176–185 (SSEECEDSDV). 2 residues coordinate Zn(2+): Cys-213 and Cys-216. Residues 255-293 (TSSVENPDGFDDSGIDALSEVEDGDKETREKSTEVAAEF) form a disordered region. Residues 262–279 (DGFDDSGIDALSEVEDGD) are compositionally biased toward acidic residues. Basic and acidic residues predominate over residues 280–293 (KETREKSTEVAAEF). Mg(2+) is bound by residues Asp-602, Asp-604, and Asp-606. The bridging helix stretch occupies residues 1005–1017 (PQEYYFHCMAGRE). The segment at 1318 to 1437 (TGPIAGNETD…EQSKKKRRKF (120 aa)) is disordered. 3 stretches are compositionally biased toward acidic residues: residues 1339-1354 (DDGD…DDLG), 1366-1379 (DEMD…DETN), and 1388-1399 (EDPEMDSENEDT). Basic and acidic residues predominate over residues 1415-1429 (EPQKEVKGVKNVKEQ).

This sequence belongs to the RNA polymerase beta' chain family. In terms of assembly, component of the RNA polymerase I (Pol I) complex consisting of at least 13 subunits.

It is found in the nucleus. It carries out the reaction RNA(n) + a ribonucleoside 5'-triphosphate = RNA(n+1) + diphosphate. Functionally, DNA-dependent RNA polymerase catalyzes the transcription of DNA into RNA using the four ribonucleoside triphosphates as substrates. Largest and catalytic core component of RNA polymerase I which synthesizes ribosomal RNA precursors. Forms the polymerase active center together with the second largest subunit. A single stranded DNA template strand of the promoter is positioned within the central active site cleft of Pol I. A bridging helix emanates from NRPA1 and crosses the cleft near the catalytic site and is thought to promote translocation of Pol I by acting as a ratchet that moves the RNA-DNA hybrid through the active site by switching from straight to bent conformations at each step of nucleotide addition. The chain is DNA-directed RNA polymerase I subunit 1 from Arabidopsis thaliana (Mouse-ear cress).